We begin with the raw amino-acid sequence, 390 residues long: Pyruvate dehydrogenase E1 component subunit alpha, somatic form, mitochondrial (390 aa).

Residues 1–29 (MRKMLAAVSRVLSGASQKPASRVLVASRN) constitute a mitochondrion transit peptide. Lysine 63 bears the N6-acetyllysine; alternate mark. Lysine 63 carries the N6-succinyllysine; alternate modification. Pyruvate is bound by residues histidine 92, tyrosine 118, arginine 119, alanine 157, glycine 165, valine 167, aspartate 196, glycine 197, alanine 198, asparagine 225, and tyrosine 227. Thiamine diphosphate is bound by residues tyrosine 118 and arginine 119. The thiamine diphosphate site is built by glycine 165, valine 167, aspartate 196, glycine 197, alanine 198, and asparagine 225. Mg(2+) is bound at residue aspartate 196. Residues asparagine 225 and tyrosine 227 each contribute to the Mg(2+) site. Serine 232 is subject to Phosphoserine; by PDK1. Lysine 244 is modified (N6-acetyllysine; alternate). At lysine 244 the chain carries N6-succinyllysine; alternate. Lysine 277 carries the N6-succinyllysine modification. Histidine 292 contributes to the thiamine diphosphate binding site. Position 293 is a phosphoserine; by PDK1, PDK2, PDK3 and PDK4 (serine 293). Residue serine 295 is modified to Phosphoserine. Serine 300 bears the Phosphoserine; by PDK1, PDK2, PDK3 and PDK4 mark. Tyrosine 301 is subject to Phosphotyrosine. Lysine 313 carries the post-translational modification N6-acetyllysine; alternate. Position 313 is an N6-succinyllysine; alternate (lysine 313). An N6-acetyllysine mark is found at lysine 321 and lysine 336. Lysine 385 carries the N6-succinyllysine modification.

In terms of assembly, heterotetramer of two PDHA1 and two PDHB subunits. The heterotetramer interacts with DLAT, and is part of the multimeric pyruvate dehydrogenase complex that contains multiple copies of pyruvate dehydrogenase (E1), dihydrolipoamide acetyltransferase (DLAT, E2) and lipoamide dehydrogenase (DLD, E3). These subunits are bound to an inner core composed of about 48 DLAT and 12 PDHX molecules. Requires thiamine diphosphate as cofactor. Mg(2+) is required as a cofactor. Phosphorylation at Ser-232, Ser-293 and Ser-300 by PDK family kinases inactivates the enzyme; for this phosphorylation at a single site is sufficient. Phosphorylation at Ser-293 interferes with access to active site, and thereby inactivates the enzyme. Dephosphorylation at all three sites, i.e. at Ser-232, Ser-293 and Ser-300, is required for reactivation. Post-translationally, acetylation alters the phosphorylation pattern. Deacetylated by SIRT3.

It localises to the mitochondrion matrix. It catalyses the reaction N(6)-[(R)-lipoyl]-L-lysyl-[protein] + pyruvate + H(+) = N(6)-[(R)-S(8)-acetyldihydrolipoyl]-L-lysyl-[protein] + CO2. Its activity is regulated as follows. Pyruvate dehydrogenase activity is inhibited by phosphorylation of PDHA1; it is reactivated by dephosphorylation. In terms of biological role, the pyruvate dehydrogenase complex catalyzes the overall conversion of pyruvate to acetyl-CoA and CO(2), and thereby links the glycolytic pathway to the tricarboxylic cycle. The polypeptide is Pyruvate dehydrogenase E1 component subunit alpha, somatic form, mitochondrial (PDHA1) (Macaca fascicularis (Crab-eating macaque)).